The chain runs to 254 residues: Tyrosine-protein phosphatase YwqE (254 aa).

Belongs to the metallo-dependent hydrolases superfamily. CpsB/CapC family. The cofactor is Mn(2+).

The catalysed reaction is O-phospho-L-tyrosyl-[protein] + H2O = L-tyrosyl-[protein] + phosphate. Its activity is regulated as follows. Inhibited by vanadate and sodium pyrophosphate. Not inhibited by sodium fluoride. Dephosphorylates the phosphotyrosine-containing proteins YwqD, YwqF and Ssb. The polypeptide is Tyrosine-protein phosphatase YwqE (ywqE) (Bacillus subtilis (strain 168)).